The chain runs to 219 residues: MTESRIDFRRAKFLISAPDIAHLDQYLPGDVGVEIAFAGRSNAGKSSALNALTEQKSLARTSKTPGRTQLINVFELDAQRRLVDLPGYGFAQVPLALKNKWQQALGEYLQKRACLSGVVVLMDIRHPLKDLDMQMIEWAVASEIPVLALLTKSDKLAQSAKMKTVNEVRLALSEFGDWVQVEPFSSLKGTGKPKVLAILNEWCHPQWLTDELDAANNAE.

Positions 31-205 constitute an EngB-type G domain; the sequence is VGVEIAFAGR…LAILNEWCHP (175 aa). GTP is bound by residues 39 to 46, 66 to 70, 84 to 87, 151 to 154, and 184 to 186; these read GRSNAGKS, GRTQL, DLPG, TKSD, and FSS. Serine 46 and threonine 68 together coordinate Mg(2+).

It belongs to the TRAFAC class TrmE-Era-EngA-EngB-Septin-like GTPase superfamily. EngB GTPase family. Mg(2+) serves as cofactor.

Its function is as follows. Necessary for normal cell division and for the maintenance of normal septation. This chain is Probable GTP-binding protein EngB, found in Shewanella baltica (strain OS223).